Here is a 124-residue protein sequence, read N- to C-terminus: UPF0102 protein BL0935 (124 aa).

This sequence belongs to the UPF0102 family.

This chain is UPF0102 protein BL0935, found in Bifidobacterium longum (strain NCC 2705).